We begin with the raw amino-acid sequence, 192 residues long: Molybdenum cofactor cytidylyltransferase (192 aa).

Residue D101 participates in Mg(2+) binding.

In terms of assembly, monomer. Interacts with the Moco-binding chaperone PaoD. The cofactor is Mg(2+). Mn(2+) serves as cofactor.

It catalyses the reaction Mo-molybdopterin + CTP + H(+) = Mo-molybdopterin cytosine dinucleotide + diphosphate. In terms of biological role, transfers a CMP moiety from CTP to Mo-molybdopterin (Mo-MPT) cofactor (Moco or molybdenum cofactor) to form Mo-molybdopterin cytosine dinucleotide (Mo-MCD) cofactor. Is specific for CTP; other nucleotides such as ATP and GTP cannot be utilized. Is also able to convert MPT to MCD in the absence of molybdate, however, with only one catalytic turnover. The sequence is that of Molybdenum cofactor cytidylyltransferase (mocA) from Escherichia coli (strain K12).